Reading from the N-terminus, the 473-residue chain is Glutamate--tRNA ligase 1 (473 aa).

The 'HIGH' region signature appears at 11 to 21 (PSPTGFLHIGG). Residues 111–132 (REQARKEGRPPRYDGRWRDRAE) are disordered. The 'KMSKS' region signature appears at 240-244 (KLSKR). Lys243 provides a ligand contact to ATP.

Belongs to the class-I aminoacyl-tRNA synthetase family. Glutamate--tRNA ligase type 1 subfamily. As to quaternary structure, monomer.

The protein resides in the cytoplasm. The catalysed reaction is tRNA(Glu) + L-glutamate + ATP = L-glutamyl-tRNA(Glu) + AMP + diphosphate. Its function is as follows. Catalyzes the attachment of glutamate to tRNA(Glu) in a two-step reaction: glutamate is first activated by ATP to form Glu-AMP and then transferred to the acceptor end of tRNA(Glu). This chain is Glutamate--tRNA ligase 1, found in Beijerinckia indica subsp. indica (strain ATCC 9039 / DSM 1715 / NCIMB 8712).